Reading from the N-terminus, the 307-residue chain is Acetaldehyde dehydrogenase 1 (307 aa).

Cys-131 functions as the Acyl-thioester intermediate in the catalytic mechanism. NAD(+) is bound by residues 162–170 (SIGPGTRKN) and Asn-273.

This sequence belongs to the acetaldehyde dehydrogenase family.

It catalyses the reaction acetaldehyde + NAD(+) + CoA = acetyl-CoA + NADH + H(+). This chain is Acetaldehyde dehydrogenase 1 (salG), found in Metapseudomonas furukawaii (Pseudomonas furukawaii).